Reading from the N-terminus, the 558-residue chain is C4b-binding protein alpha chain (558 aa).

The N-terminal stretch at 1-13 (MSLTAALWVAVFG) is a signal peptide. 8 consecutive Sushi domains span residues 14-74 (KCGP…ACVK), 75-136 (KSCR…ECVI), 137-201 (AKCG…TCER), 202-260 (IICP…VCEL), 261-326 (NSCT…GCKE), 327-388 (ICCP…SCHQ), 389-445 (SCDF…QCKA), and 446-503 (LCRK…RCEQ). 16 disulfides stabilise this stretch: cysteine 15–cysteine 60, cysteine 45–cysteine 72, cysteine 77–cysteine 118, cysteine 104–cysteine 134, cysteine 139–cysteine 182, cysteine 168–cysteine 199, cysteine 204–cysteine 246, cysteine 232–cysteine 258, cysteine 263–cysteine 312, cysteine 296–cysteine 324, cysteine 329–cysteine 373, cysteine 363–cysteine 386, cysteine 390–cysteine 431, cysteine 417–cysteine 443, cysteine 447–cysteine 488, and cysteine 474–cysteine 501. N-linked (GlcNAc...) asparagine glycosylation occurs at asparagine 31. Asparagine 177 and asparagine 186 each carry an N-linked (GlcNAc...) asparagine glycan. N-linked (GlcNAc...) asparagine glycans are attached at residues asparagine 469 and asparagine 491.

In terms of assembly, disulfide-linked complex of alpha and beta chains.

It localises to the secreted. Functionally, controls the classical pathway of complement activation. It binds as a cofactor to C3b/C4b inactivator (C3bINA), which then hydrolyzes the complement fragment C4b. It also accelerates the degradation of the C4bC2a complex (C3 convertase) by dissociating the complement fragment C2a. Alpha chain binds C4b. It also interacts with anticoagulant protein S and with serum amyloid P component. The polypeptide is C4b-binding protein alpha chain (C4bpa) (Rattus norvegicus (Rat)).